The primary structure comprises 222 residues: Germin-like protein 11-1 (222 aa).

Positions Met1–Ser23 are cleaved as a signal peptide. Cys32 and Cys49 are oxidised to a cystine. The Cupin type-1 domain occupies Asp72–Ala195. Positions 111, 113, 118, and 157 each coordinate Mn(2+).

It belongs to the germin family. Oligomer (believed to be a pentamer but probably hexamer).

It localises to the secreted. Its subcellular location is the extracellular space. The protein localises to the apoplast. In terms of biological role, may play a role in plant defense. Probably has no oxalate oxidase activity even if the active site is conserved. The sequence is that of Germin-like protein 11-1 from Oryza sativa subsp. japonica (Rice).